A 365-amino-acid polypeptide reads, in one-letter code: Protein RecA (365 aa).

69 to 76 is a binding site for ATP; the sequence is GPESSGKT. Positions 344-365 are disordered; the sequence is LDDNPDTDDHDVEDIDENTDEE. A compositionally biased stretch (acidic residues) spans 347–365; sequence NPDTDDHDVEDIDENTDEE.

This sequence belongs to the RecA family.

It localises to the cytoplasm. In terms of biological role, can catalyze the hydrolysis of ATP in the presence of single-stranded DNA, the ATP-dependent uptake of single-stranded DNA by duplex DNA, and the ATP-dependent hybridization of homologous single-stranded DNAs. It interacts with LexA causing its activation and leading to its autocatalytic cleavage. This chain is Protein RecA, found in Arthrospira platensis (Spirulina platensis).